The chain runs to 256 residues: Inner membrane transport permease YadH (256 aa).

Topologically, residues 1–22 are periplasmic; it reads MMHLYWVALKSIWAKEIHRFMR. In terms of domain architecture, ABC transmembrane type-2 spans 22–251; it reads RIWVQTLVPP…LICWSLIQRG (230 aa). The helical transmembrane segment at 23–43 threads the bilayer; that stretch reads IWVQTLVPPVITMTLYFIIFG. Topologically, residues 44–52 are cytoplasmic; it reads NLIGSRIGD. The helical transmembrane segment at 53 to 73 threads the bilayer; the sequence is MHGFSYMQFIVPGLIMMSVIT. The Periplasmic portion of the chain corresponds to 74–94; sequence NAYANVASSFFGAKFQRNIEE. The helical transmembrane segment at 95 to 115 threads the bilayer; the sequence is LLVAPVPTHVIIAGYVGGGVA. Arg116 is a topological domain (cytoplasmic). Residues 117–137 form a helical membrane-spanning segment; sequence GLFVGILVTAISLFFVPFQVH. Position 138 (Ser138) is a topological domain, periplasmic. A helical transmembrane segment spans residues 139-159; sequence WVFVALTLVLTAVLFSLAGLL. The Cytoplasmic portion of the chain corresponds to 160–169; the sequence is NGVFAKTFDD. A helical membrane pass occupies residues 170–190; sequence ISLVPTFVLTPLTYLGGVFYS. The Periplasmic segment spans residues 191–223; that stretch reads LTLLPPFWQGLSHLNPIVYMISGFRYGFLGIND. A helical membrane pass occupies residues 224-244; sequence VPLVTTFGVLVVFIVAFYLIC. Residues 245–256 are Cytoplasmic-facing; it reads WSLIQRGRGLRS.

This sequence belongs to the ABC-2 integral membrane protein family.

Its subcellular location is the cell inner membrane. This is Inner membrane transport permease YadH (yadH) from Escherichia coli O157:H7.